The chain runs to 606 residues: Glutamine--fructose-6-phosphate aminotransferase [isomerizing] (606 aa).

The active-site Nucleophile; for GATase activity is Cys-2. The region spanning 2 to 217 (CGIVGMVGEN…DGDVMVLRKD (216 aa)) is the Glutamine amidotransferase type-2 domain. SIS domains are found at residues 284 to 423 (YEEL…INGY) and 455 to 596 (LSEK…PDKP). The For Fru-6P isomerization activity role is filled by Lys-601.

Homodimer.

The protein resides in the cytoplasm. It catalyses the reaction D-fructose 6-phosphate + L-glutamine = D-glucosamine 6-phosphate + L-glutamate. Functionally, catalyzes the first step in hexosamine metabolism, converting fructose-6P into glucosamine-6P using glutamine as a nitrogen source. In Thermotoga maritima (strain ATCC 43589 / DSM 3109 / JCM 10099 / NBRC 100826 / MSB8), this protein is Glutamine--fructose-6-phosphate aminotransferase [isomerizing].